The sequence spans 36 residues: Photosystem I reaction center subunit VIII (36 aa).

The helical transmembrane segment at 8–28 (SILVPLVGLVFPAIAMASLFL) threads the bilayer.

The protein belongs to the PsaI family.

Its subcellular location is the plastid. It localises to the chloroplast thylakoid membrane. Functionally, may help in the organization of the PsaL subunit. This chain is Photosystem I reaction center subunit VIII, found in Vitis vinifera (Grape).